The sequence spans 345 residues: MADFFTTPGGIAVLILAQVLAVIGFVMVSLLFLVYGDRKIWAAVQMRRGPNVVGTFGLLQTVADALKYVVKEVVVPAGADKTVFMLAPMTSFVLALLAWAVIPFNDGWVLSDINVAILFVFAISSLEVYGVIMGGWASNSKYPFLGSLRSAAQMISYEVSLGLIIIGVIISTGSMNFGGIVAAQDGPYGFFSWYWLPHFPMVFLFFISCLAETNRPPFDLPEAESELVAGYQVEYSSTPFLLFMAGEYIAIFLMCALTSLLFFGGWLSPIPGLPDGVFWMIAKMAFFFFLFAMVKAITPRYRYDQLMRLGWKVFLPFSLVWVVFVAFAAKFEWFWGAYARWGMGG.

Transmembrane regions (helical) follow at residues 13-33 (VLIL…LLFL), 84-104 (FMLA…VIPF), 115-135 (VAIL…IMGG), 161-181 (LGLI…GGIV), 190-210 (FFSW…ISCL), 248-268 (YIAI…GWLS), 277-297 (VFWM…VKAI), and 309-329 (LGWK…AFAA).

It belongs to the complex I subunit 1 family. As to quaternary structure, NDH-1 is composed of 14 different subunits. Subunits NuoA, H, J, K, L, M, N constitute the membrane sector of the complex.

The protein resides in the cell inner membrane. It catalyses the reaction a quinone + NADH + 5 H(+)(in) = a quinol + NAD(+) + 4 H(+)(out). Its function is as follows. NDH-1 shuttles electrons from NADH, via FMN and iron-sulfur (Fe-S) centers, to quinones in the respiratory chain. The immediate electron acceptor for the enzyme in this species is believed to be ubiquinone. Couples the redox reaction to proton translocation (for every two electrons transferred, four hydrogen ions are translocated across the cytoplasmic membrane), and thus conserves the redox energy in a proton gradient. This subunit may bind ubiquinone. This chain is NADH-quinone oxidoreductase subunit H, found in Roseobacter denitrificans (strain ATCC 33942 / OCh 114) (Erythrobacter sp. (strain OCh 114)).